We begin with the raw amino-acid sequence, 138 residues long: Acidic phospholipase A2 CoaPLA2 (138 aa).

A signal peptide spans 1–16 (MRTLWIVAVLLLGVEG). Disulfide bonds link cysteine 42–cysteine 131, cysteine 44–cysteine 60, cysteine 59–cysteine 111, cysteine 65–cysteine 138, cysteine 66–cysteine 104, cysteine 73–cysteine 97, and cysteine 91–cysteine 102. The Ca(2+) site is built by tyrosine 43, glycine 45, and glycine 47. Histidine 63 is a catalytic residue. Residue aspartate 64 participates in Ca(2+) binding. Aspartate 105 is a catalytic residue.

The protein belongs to the phospholipase A2 family. Group II subfamily. D49 sub-subfamily. As to quaternary structure, homodimer. Requires Ca(2+) as cofactor. In terms of tissue distribution, expressed by the venom gland.

It localises to the secreted. It catalyses the reaction a 1,2-diacyl-sn-glycero-3-phosphocholine + H2O = a 1-acyl-sn-glycero-3-phosphocholine + a fatty acid + H(+). Snake venom phospholipase A2 (PLA2) that shows very low inhibition of ADP-induced platelet aggregation in platelet-rich plasma of human, rabbit and guinea pig. Shows edema-inducing activity and myotoxicity. PLA2 catalyzes the calcium-dependent hydrolysis of the 2-acyl groups in 3-sn-phosphoglycerides. The polypeptide is Acidic phospholipase A2 CoaPLA2 (Crotalus lutosus abyssus (Grand Canyon rattlesnake)).